Consider the following 261-residue polypeptide: Sepiapterin reductase (261 aa).

NADP(+)-binding positions include 16 to 22 (GASRGFG), 44 to 45 (RT), and 71 to 72 (DL). Substrate is bound by residues 158–159 (SL) and Y171. Residue K175 coordinates NADP(+). A substrate-binding site is contributed by G200. Residue 202 to 207 (LDTDMH) coordinates NADP(+). D258 serves as a coordination point for substrate.

The protein belongs to the sepiapterin reductase family. Homodimer.

The protein localises to the cytoplasm. It carries out the reaction L-erythro-7,8-dihydrobiopterin + NADP(+) = L-sepiapterin + NADPH + H(+). The enzyme catalyses (6R)-L-erythro-5,6,7,8-tetrahydrobiopterin + 2 NADP(+) = 6-pyruvoyl-5,6,7,8-tetrahydropterin + 2 NADPH + 2 H(+). Its function is as follows. Catalyzes the final one or two reductions in tetra-hydrobiopterin biosynthesis to form 5,6,7,8-tetrahydrobiopterin. This Xenopus tropicalis (Western clawed frog) protein is Sepiapterin reductase (spr).